Here is a 192-residue protein sequence, read N- to C-terminus: Protein GrpE (192 aa).

Residues 1–43 (MSKEEFPHEKDLKDEVTPDKAPKKDPKAASKEEVKEDPAKDYE) are disordered.

This sequence belongs to the GrpE family. Homodimer.

The protein resides in the cytoplasm. Participates actively in the response to hyperosmotic and heat shock by preventing the aggregation of stress-denatured proteins, in association with DnaK and GrpE. It is the nucleotide exchange factor for DnaK and may function as a thermosensor. Unfolded proteins bind initially to DnaJ; upon interaction with the DnaJ-bound protein, DnaK hydrolyzes its bound ATP, resulting in the formation of a stable complex. GrpE releases ADP from DnaK; ATP binding to DnaK triggers the release of the substrate protein, thus completing the reaction cycle. Several rounds of ATP-dependent interactions between DnaJ, DnaK and GrpE are required for fully efficient folding. This chain is Protein GrpE, found in Lactobacillus gasseri (strain ATCC 33323 / DSM 20243 / BCRC 14619 / CIP 102991 / JCM 1131 / KCTC 3163 / NCIMB 11718 / NCTC 13722 / AM63).